Reading from the N-terminus, the 490-residue chain is MEMANDKVAETVIVGNYVEMESEGKPPQDIKSKLSNFLWHGGSAYDAWFSCASNQVAQVLLTLPYSFSQLGMLSGILFQLFYGILGSWTAYLISILYVEYRTRKEREKVNFRSHVIQWFEVLDGLLGKHWRNVGLGFNCTFLLFGSVIQLIACASNIYYINDNLDKRTWTYIFGACCATTVFIPSFHNYRIWSFLGLVMTTYTAWYLTIAAVLHGQVEGVKHSGPNKIILYFTGATNILYTFGGHAVTVEIMHAMWKPQKFKAIYLLATLYVLTLTIPSATAVYWAFGDMLLNHSNAFALLPKSPFRDMAVILMLIHQFITFGFACTPLYFVWEKTVGMHECKSLCKRALVRLPVVIPIWFLAIIFPFFGPINSTVGSLLVSFTVYIIPALAHIFTFKSSSARQNAVEQPPKFVGRWVGTFVINVFIVVWVLIVGFGFGGWASMVNFVHQIDTFGLFTKCYQCPPPTPSVPTMPPHQMNATAPSPHHHHH.

The Cytoplasmic portion of the chain corresponds to 1–55; the sequence is MEMANDKVAETVIVGNYVEMESEGKPPQDIKSKLSNFLWHGGSAYDAWFSCASNQ. Residues 56–73 traverse the membrane as a helical segment; sequence VAQVLLTLPYSFSQLGML. Topologically, residues 74-75 are extracellular; sequence SG. The chain crosses the membrane as a helical span at residues 76–96; it reads ILFQLFYGILGSWTAYLISIL. Residues 97–132 are Cytoplasmic-facing; the sequence is YVEYRTRKEREKVNFRSHVIQWFEVLDGLLGKHWRN. The helical transmembrane segment at 133-153 threads the bilayer; the sequence is VGLGFNCTFLLFGSVIQLIAC. The Extracellular portion of the chain corresponds to 154 to 168; sequence ASNIYYINDNLDKRT. Residues 169–189 traverse the membrane as a helical segment; the sequence is WTYIFGACCATTVFIPSFHNY. Residue Arg190 is a topological domain, cytoplasmic. Residues 191-211 form a helical membrane-spanning segment; that stretch reads IWSFLGLVMTTYTAWYLTIAA. Residues 212-227 lie on the Extracellular side of the membrane; sequence VLHGQVEGVKHSGPNK. The chain crosses the membrane as a helical span at residues 228–248; the sequence is IILYFTGATNILYTFGGHAVT. Residues 249–262 lie on the Cytoplasmic side of the membrane; it reads VEIMHAMWKPQKFK. A helical transmembrane segment spans residues 263–283; that stretch reads AIYLLATLYVLTLTIPSATAV. At 284–310 the chain is on the extracellular side; the sequence is YWAFGDMLLNHSNAFALLPKSPFRDMA. N-linked (GlcNAc...) asparagine glycosylation occurs at Asn293. Residues 311–331 form a helical membrane-spanning segment; the sequence is VILMLIHQFITFGFACTPLYF. Residues 332–352 lie on the Cytoplasmic side of the membrane; the sequence is VWEKTVGMHECKSLCKRALVR. The helical transmembrane segment at 353-373 threads the bilayer; sequence LPVVIPIWFLAIIFPFFGPIN. The Extracellular portion of the chain corresponds to 374 to 376; sequence STV. The chain crosses the membrane as a helical span at residues 377–397; sequence GSLLVSFTVYIIPALAHIFTF. Residues 398-420 lie on the Cytoplasmic side of the membrane; the sequence is KSSSARQNAVEQPPKFVGRWVGT. The chain crosses the membrane as a helical span at residues 421 to 441; the sequence is FVINVFIVVWVLIVGFGFGGW. Over 442 to 490 the chain is Extracellular; that stretch reads ASMVNFVHQIDTFGLFTKCYQCPPPTPSVPTMPPHQMNATAPSPHHHHH. Residue Asn479 is glycosylated (N-linked (GlcNAc...) asparagine).

The protein belongs to the amino acid/polyamine transporter 2 family. Amino acid/auxin permease (AAAP) (TC 2.A.18.1) subfamily. As to expression, shoots and roots of nodulating plants, at low levels.

The protein localises to the cell membrane. Functionally, carrier protein involved in proton-driven auxin influx. Mediates the formation of auxin gradient from developing leaves (site of auxin biosynthesis) to tips by contributing to the loading of auxin in vascular tissues and facilitating acropetal (base to tip) auxin transport within inner tissues of the root apex, and basipetal (tip to base) auxin transport within outer tissues of the root apex. May be involved in lateral roots and nodules formation. This chain is Auxin transporter-like protein 5 (LAX5), found in Medicago truncatula (Barrel medic).